The following is a 120-amino-acid chain: MTIEQILETIENMKVLELNELVKAAEEKFGVSASAAVVVGAAAGGAVEEEQTEFDVILDNAGSSKINVIKAVREITGLGLKEAKGVVDEAPKAIKEAISKEDAEAIKAKLEEAGASVTLK.

Belongs to the bacterial ribosomal protein bL12 family. In terms of assembly, homodimer. Part of the ribosomal stalk of the 50S ribosomal subunit. Forms a multimeric L10(L12)X complex, where L10 forms an elongated spine to which 2 to 4 L12 dimers bind in a sequential fashion. Binds GTP-bound translation factors.

Functionally, forms part of the ribosomal stalk which helps the ribosome interact with GTP-bound translation factors. Is thus essential for accurate translation. In Alkaliphilus metalliredigens (strain QYMF), this protein is Large ribosomal subunit protein bL12.